Consider the following 375-residue polypeptide: MIKKIPYKLLAVSTLLTITTANVVSPVATFASEIEQTNNGDTALSANEAKMKETLQKAGLFAKSMNAYSYMLIKNPDVNFEGITINGYVDLPGRIVQDQKNARAHAVTWDTKVKKQLLDTLTGIVEYDTTFDNYYETMVEAINTGDGETLKEGITDLRGEIQQNQKYAQQLIEELTKLRDSIGHDVRAFGSNKELLQSILKNQGADVDADQKRLEEVLGSVNYYKQLESDGFNVMKGAILGLPIIGGIIVGVARDNLGKLEPLLAELRQTVDYKVTLNRVVGVAYSNINEIDKALDDAINALTYMSTQWHDLDSQYSGVLGHIENAAQKADQNKFKFLKPNLNAAKDSWKTLRTDAVTLKEGIKELKVETVTPQK.

A signal peptide spans Met1–Ala31. Residues Phe232–Val252 form a helical membrane-spanning segment.

Composed of a binding component, B, and two lytic components, L1 and L2. All three subunits act synergically to cause hemolysis.

The protein localises to the secreted. It is found in the host cell membrane. Its function is as follows. Cytotoxic protein, part of the enterotoxin complex. Responsible for binding to erythrocytes. This enterotoxin is thought to be the cause of the diarrheal form of gastroenteritis caused by food-borne strains of B.cereus. The protein is Hemolysin BL-binding component (hblA) of Bacillus cereus.